Here is a 441-residue protein sequence, read N- to C-terminus: Nucleolar and spindle-associated protein 1 (441 aa).

2 disordered regions span residues 47 to 186 (ARKG…PNFK) and 216 to 267 (MNEL…LGLK). Composition is skewed to polar residues over residues 56-74 (ESQT…ISNQ) and 100-116 (DSQQ…PTEF). The segment covering 117–126 (QNHEKQESQD) has biased composition (basic and acidic residues). Position 124 is a phosphoserine; by ATM (Ser124). Ser135 bears the Phosphoserine mark. The segment covering 152–171 (RDSKVPSEGKKSLYTDESSK) has biased composition (basic and acidic residues). At Thr182 the chain carries Phosphothreonine. The interaction with microtubules stretch occupies residues 237 to 382 (GRLSVASTPI…HKGKLKPWGQ (146 aa)). Ser240 carries the post-translational modification Phosphoserine. The span at 241 to 264 (VASTPISQRRSQGRSCGPASQSTL) shows a compositional bias: polar residues. Thr244 bears the Phosphothreonine mark. 5 positions are modified to phosphoserine: Ser247, Ser255, Ser269, Ser276, and Ser311. Positions 286-319 (AATKDNEHKRSLTKTPARKSAHVTVSGGTPKGEA) are disordered. Phosphothreonine occurs at positions 314, 338, and 349. Ser352 and Ser363 each carry phosphoserine. A KEN box motif is present at residues 384 to 390 (KENNYLN). Residues 401 to 427 (KTYKQPHLQTKEEQRKKREQERKEKKA) are disordered. The stretch at 407 to 432 (HLQTKEEQRKKREQERKEKKAKVLGM) forms a coiled coil. The segment covering 409–424 (QTKEEQRKKREQERKE) has biased composition (basic and acidic residues). An N6-acetyllysine modification is found at Lys411.

It belongs to the NUSAP family. Interacts with DNA and microtubules. Microtubule bundling is inhibited by IPO7, KPNA2 and KPNB1 while association with DNA is also inhibited by IPO7 and KPNA2. Post-translationally, ubiquitinated. Ubiquitination by FZR1 may lead to proteasome-dependent degradation of this protein. Phosphorylation by ATM in G2/M-phase induces mitotic arrest.

Its subcellular location is the cytoplasm. It is found in the nucleus. It localises to the nucleolus. The protein localises to the cytoskeleton. The protein resides in the spindle. Its subcellular location is the chromosome. Functionally, microtubule-associated protein with the capacity to bundle and stabilize microtubules. May associate with chromosomes and promote the organization of mitotic spindle microtubules around them. The chain is Nucleolar and spindle-associated protein 1 (NUSAP1) from Homo sapiens (Human).